We begin with the raw amino-acid sequence, 89 residues long: Small ribosomal subunit protein uS15 (89 aa).

Positions 1–21 (MAITQERKNQLISEFKTHESD) are enriched in basic and acidic residues. The disordered stretch occupies residues 1-23 (MAITQERKNQLISEFKTHESDTG).

The protein belongs to the universal ribosomal protein uS15 family. Part of the 30S ribosomal subunit. Forms a bridge to the 50S subunit in the 70S ribosome, contacting the 23S rRNA.

Its function is as follows. One of the primary rRNA binding proteins, it binds directly to 16S rRNA where it helps nucleate assembly of the platform of the 30S subunit by binding and bridging several RNA helices of the 16S rRNA. Forms an intersubunit bridge (bridge B4) with the 23S rRNA of the 50S subunit in the ribosome. The chain is Small ribosomal subunit protein uS15 from Bacillus velezensis (strain DSM 23117 / BGSC 10A6 / LMG 26770 / FZB42) (Bacillus amyloliquefaciens subsp. plantarum).